A 427-amino-acid polypeptide reads, in one-letter code: Enolase (427 aa).

Gln-163 provides a ligand contact to (2R)-2-phosphoglycerate. Glu-205 functions as the Proton donor in the catalytic mechanism. Positions 242, 285, and 312 each coordinate Mg(2+). (2R)-2-phosphoglycerate-binding residues include Lys-337, Arg-366, Ser-367, and Lys-388. Lys-337 serves as the catalytic Proton acceptor.

This sequence belongs to the enolase family. Mg(2+) serves as cofactor.

It is found in the cytoplasm. The protein localises to the secreted. The protein resides in the cell surface. It carries out the reaction (2R)-2-phosphoglycerate = phosphoenolpyruvate + H2O. It participates in carbohydrate degradation; glycolysis; pyruvate from D-glyceraldehyde 3-phosphate: step 4/5. Functionally, catalyzes the reversible conversion of 2-phosphoglycerate (2-PG) into phosphoenolpyruvate (PEP). It is essential for the degradation of carbohydrates via glycolysis. This is Enolase from Paraburkholderia phytofirmans (strain DSM 17436 / LMG 22146 / PsJN) (Burkholderia phytofirmans).